Reading from the N-terminus, the 277-residue chain is Putative phosphoenolpyruvate synthase regulatory protein (277 aa).

157 to 164 contacts ADP; sequence GVSRCGKT.

This sequence belongs to the pyruvate, phosphate/water dikinase regulatory protein family. PSRP subfamily.

The catalysed reaction is [pyruvate, water dikinase] + ADP = [pyruvate, water dikinase]-phosphate + AMP + H(+). It carries out the reaction [pyruvate, water dikinase]-phosphate + phosphate + H(+) = [pyruvate, water dikinase] + diphosphate. In terms of biological role, bifunctional serine/threonine kinase and phosphorylase involved in the regulation of the phosphoenolpyruvate synthase (PEPS) by catalyzing its phosphorylation/dephosphorylation. The chain is Putative phosphoenolpyruvate synthase regulatory protein from Cronobacter sakazakii (strain ATCC BAA-894) (Enterobacter sakazakii).